Here is a 479-residue protein sequence, read N- to C-terminus: MAALEKMTFPKKMTFPEKPSHKKYRAALKKEKRKKRRQELARLRDSGLSQEEEEDTFIEEQQLEEEKLLERERERLHEEWLLREQKAQEEFRIKKEKEEAAKKWLEEQERKLKEQWKEQQRKEREEEEQKQQEKKEKEEAVQKMLDQAENDLENSTTWQNPEPPVDFRVMEKDRANCPFYSKTGACRFGDRCSRKHNFPTSSPTLLIKSMFTTFGMEQCRRDDYDPDASLEYSEEETYQQFLDFYEDVLPEFKNVGKVIQFKVSCNLEPHLRGNVYVQYQSEEECQAALSLFNGRWYAGRQLQCEFCPVTRWKMAICGLFEIQQCPRGKHCNFLHVFRNPNNEFWEANRDIYLSSDQTGSSFGKNSERREKMGHHDHYYSRQRGRRNPSPDHTYKRNGESERKKSSHRGKKSHKRTSKSRERHNSPSRGRNRHRSWDQGRRSQSRRSHRSRSQSSSRCRSRGRRKSGNRDRTVQSPQSK.

Residues 1 to 63 (MAALEKMTFP…EDTFIEEQQL (63 aa)) form a disordered region. Residues 20–37 (SHKKYRAALKKEKRKKRR) show a composition bias toward basic residues. The span at 50–63 (QEEEEDTFIEEQQL) shows a compositional bias: acidic residues. K67 participates in a covalent cross-link: Glycyl lysine isopeptide (Lys-Gly) (interchain with G-Cter in SUMO2). The segment at 171 to 199 (EKDRANCPFYSKTGACRFGDRCSRKHNFP) adopts a C3H1-type 1 zinc-finger fold. Residues 203-309 (PTLLIKSMFT…RQLQCEFCPV (107 aa)) enclose the RRM domain. The C3H1-type 2 zinc finger occupies 311-338 (RWKMAICGLFEIQQCPRGKHCNFLHVFR). S354 is modified (phosphoserine). The interval 356–479 (DQTGSSFGKN…DRTVQSPQSK (124 aa)) is disordered. Composition is skewed to basic and acidic residues over residues 365 to 379 (NSER…DHYY) and 388 to 403 (PSPD…SERK). A Phosphoserine modification is found at S389. Basic residues-rich tracts occupy residues 404-417 (KSSH…KRTS) and 442-451 (SQSRRSHRSR).

It is found in the nucleus. The protein is U2 small nuclear ribonucleoprotein auxiliary factor 35 kDa subunit-related protein 1 of Homo sapiens (Human).